Reading from the N-terminus, the 208-residue chain is Small ribosomal subunit protein uS4 (208 aa).

The S4 RNA-binding domain maps to 98 to 164; the sequence is TRLDNVVYRL…PKVKSIREIA (67 aa).

The protein belongs to the universal ribosomal protein uS4 family. Part of the 30S ribosomal subunit. Contacts protein S5. The interaction surface between S4 and S5 is involved in control of translational fidelity.

In terms of biological role, one of the primary rRNA binding proteins, it binds directly to 16S rRNA where it nucleates assembly of the body of the 30S subunit. Its function is as follows. With S5 and S12 plays an important role in translational accuracy. The polypeptide is Small ribosomal subunit protein uS4 (Ruminiclostridium cellulolyticum (strain ATCC 35319 / DSM 5812 / JCM 6584 / H10) (Clostridium cellulolyticum)).